A 385-amino-acid polypeptide reads, in one-letter code: MIQAPRIAIIAGEASGDHLGAGLIQQLRLHFATAEFIGIGGDMMRSAGCQTWFDTSELAVMGLTEVLRHLPRLLKIRREFCKRALAWHPDVLIGIDAPDFNLTVERWFKQRHIRTVHYVSPSIWAWREKRAAKIGASVDRVLCLFPMEPPIYARYGIDARFVGHPMADEIPYQTDRATARTALGLPLLSPVLAVLPGSRHSEISQLGNTFLEAAGQLSEHLPGLHVVIPAANTQCKPLLAEQLSRSTLPVMHSHLLDSSARTAMLAADVVLVASGTATLEAMLLKRPMVVAYKVAPLTYRIVKTLKLLKINRFALPNILAGEDLVPELIQKDCTAPALCAALLDCFKHPQKVTALQNRYLQLHTQLRRNASTRAAEAIAELLQQR.

It belongs to the LpxB family.

It carries out the reaction a lipid X + a UDP-2-N,3-O-bis[(3R)-3-hydroxyacyl]-alpha-D-glucosamine = a lipid A disaccharide + UDP + H(+). The protein operates within bacterial outer membrane biogenesis; LPS lipid A biosynthesis. Condensation of UDP-2,3-diacylglucosamine and 2,3-diacylglucosamine-1-phosphate to form lipid A disaccharide, a precursor of lipid A, a phosphorylated glycolipid that anchors the lipopolysaccharide to the outer membrane of the cell. This chain is Lipid-A-disaccharide synthase, found in Xylella fastidiosa (strain M23).